Reading from the N-terminus, the 475-residue chain is Ribulose bisphosphate carboxylase large chain (475 aa).

A propeptide spanning residues 1-2 (MS) is cleaved from the precursor. Pro-3 is subject to N-acetylproline. N6,N6,N6-trimethyllysine is present on Lys-14. Substrate is bound by residues Asn-123 and Thr-173. Lys-175 acts as the Proton acceptor in catalysis. Lys-177 lines the substrate pocket. 3 residues coordinate Mg(2+): Lys-201, Asp-203, and Glu-204. Lys-201 carries the post-translational modification N6-carboxylysine. The Proton acceptor role is filled by His-294. 3 residues coordinate substrate: Arg-295, His-327, and Ser-379.

Belongs to the RuBisCO large chain family. Type I subfamily. In terms of assembly, heterohexadecamer of 8 large chains and 8 small chains; disulfide-linked. The disulfide link is formed within the large subunit homodimers. Mg(2+) is required as a cofactor. Post-translationally, the disulfide bond which can form in the large chain dimeric partners within the hexadecamer appears to be associated with oxidative stress and protein turnover.

It is found in the plastid. Its subcellular location is the chloroplast. It catalyses the reaction 2 (2R)-3-phosphoglycerate + 2 H(+) = D-ribulose 1,5-bisphosphate + CO2 + H2O. It carries out the reaction D-ribulose 1,5-bisphosphate + O2 = 2-phosphoglycolate + (2R)-3-phosphoglycerate + 2 H(+). RuBisCO catalyzes two reactions: the carboxylation of D-ribulose 1,5-bisphosphate, the primary event in carbon dioxide fixation, as well as the oxidative fragmentation of the pentose substrate in the photorespiration process. Both reactions occur simultaneously and in competition at the same active site. The chain is Ribulose bisphosphate carboxylase large chain from Pinus edulis (Pinyon pine).